A 228-amino-acid polypeptide reads, in one-letter code: 2-C-methyl-D-erythritol 4-phosphate cytidylyltransferase (228 aa).

Belongs to the IspD/TarI cytidylyltransferase family. IspD subfamily.

The catalysed reaction is 2-C-methyl-D-erythritol 4-phosphate + CTP + H(+) = 4-CDP-2-C-methyl-D-erythritol + diphosphate. The protein operates within isoprenoid biosynthesis; isopentenyl diphosphate biosynthesis via DXP pathway; isopentenyl diphosphate from 1-deoxy-D-xylulose 5-phosphate: step 2/6. In terms of biological role, catalyzes the formation of 4-diphosphocytidyl-2-C-methyl-D-erythritol from CTP and 2-C-methyl-D-erythritol 4-phosphate (MEP). This Nostoc sp. (strain PCC 7120 / SAG 25.82 / UTEX 2576) protein is 2-C-methyl-D-erythritol 4-phosphate cytidylyltransferase.